A 418-amino-acid chain; its full sequence is MQPTDPLEEARAQLRRAVDLLGYDDYVYEVLANPDRVLQVRVTIKMDDGTVKTFLGWRSQHNSALGPYKGGVRYHPNVTMNEVIALSMWMTWKNSLAGLPYGGGKGGVRVNPKILSPRELELLSRKYFESISDIVGVDQDIPAPDVYTDPQVMSWFLDEYNRVKRGQFFGVVTGKPVELGGLNARIVSTGYGVAVSTRVAAEKFLGGLEGRTVAVQGYGNVGYYAAKFLAEMGAKIVAVSDSRGGIYDPEGIDPEEALKVKRSTGTVANYQRGKKISTMEILELPVDILVPAAIEEVITDENADRIKAKIISEGANGPTTTAAEKILVKKGVLVLPDILANAGGVIMSHIEWVNNRMGGWITDEEALKKLEQKMVENTKTVITYWEKNLKPEENSLRDAAYMIAVERVFRAMKLRGWI.

Lys105 is a catalytic residue. Residue 217-223 participates in NAD(+) binding; the sequence is GYGNVGY.

The protein belongs to the Glu/Leu/Phe/Val dehydrogenases family. In terms of assembly, homohexamer.

The protein localises to the cytoplasm. The enzyme catalyses L-glutamate + NAD(+) + H2O = 2-oxoglutarate + NH4(+) + NADH + H(+). The catalysed reaction is L-glutamate + NADP(+) + H2O = 2-oxoglutarate + NH4(+) + NADPH + H(+). This chain is Glutamate dehydrogenase (gdhA), found in Aeropyrum pernix (strain ATCC 700893 / DSM 11879 / JCM 9820 / NBRC 100138 / K1).